Reading from the N-terminus, the 122-residue chain is Large ribosomal subunit protein uL14 (122 aa).

It belongs to the universal ribosomal protein uL14 family. In terms of assembly, part of the 50S ribosomal subunit. Forms a cluster with proteins L3 and L19. In the 70S ribosome, L14 and L19 interact and together make contacts with the 16S rRNA in bridges B5 and B8.

Binds to 23S rRNA. Forms part of two intersubunit bridges in the 70S ribosome. The chain is Large ribosomal subunit protein uL14 from Psychrobacter sp. (strain PRwf-1).